Here is a 403-residue protein sequence, read N- to C-terminus: Creatinase (403 aa).

The active site involves His-232.

The protein belongs to the peptidase M24 family. Creatinase subfamily. Homodimer.

It carries out the reaction creatine + H2O = sarcosine + urea. This is Creatinase from Flavobacterium sp. (strain U-188).